The primary structure comprises 379 residues: Succinyl-diaminopimelate desuccinylase (379 aa).

Histidine 70 lines the Zn(2+) pocket. Residue aspartate 72 is part of the active site. Aspartate 103 contributes to the Zn(2+) binding site. The active-site Proton acceptor is the glutamate 137. Residues glutamate 138, glutamate 166, and histidine 352 each coordinate Zn(2+).

It belongs to the peptidase M20A family. DapE subfamily. Homodimer. Zn(2+) is required as a cofactor. Co(2+) serves as cofactor.

The catalysed reaction is N-succinyl-(2S,6S)-2,6-diaminopimelate + H2O = (2S,6S)-2,6-diaminopimelate + succinate. Its pathway is amino-acid biosynthesis; L-lysine biosynthesis via DAP pathway; LL-2,6-diaminopimelate from (S)-tetrahydrodipicolinate (succinylase route): step 3/3. Catalyzes the hydrolysis of N-succinyl-L,L-diaminopimelic acid (SDAP), forming succinate and LL-2,6-diaminopimelate (DAP), an intermediate involved in the bacterial biosynthesis of lysine and meso-diaminopimelic acid, an essential component of bacterial cell walls. The sequence is that of Succinyl-diaminopimelate desuccinylase from Burkholderia lata (strain ATCC 17760 / DSM 23089 / LMG 22485 / NCIMB 9086 / R18194 / 383).